A 632-amino-acid chain; its full sequence is PWWP domain-containing protein 5 (632 aa).

Residues 97–158 enclose the PWWP domain; it reads DSDLVWAKLR…ASQIKPFHQN (62 aa). The segment at 310–452 is disordered; the sequence is RKTDYKDNAE…AERKISSPDE (143 aa). Composition is skewed to basic and acidic residues over residues 313 to 326, 339 to 364, 371 to 383, and 425 to 449; these read DYKD…EKTL, STEK…GKSE, QQKE…HSNE, and KSTE…KISS. The Nuclear localization signal motif lies at 352 to 359; that stretch reads KRKVESSE.

The protein belongs to the PDP family. In terms of assembly, component of the PRC2 (polycomb repressive complex 2) complex which regulates histone methylation on histone H3K27.

It localises to the nucleus. May influence gene expression by regulating the function of the PRC2 complex and modulating H3K27me3 level. In Arabidopsis thaliana (Mouse-ear cress), this protein is PWWP domain-containing protein 5.